We begin with the raw amino-acid sequence, 322 residues long: Olfactory receptor 5P2 (322 aa).

Residues 1–28 (MNSLKDGNHTALTGFILLGLTDDPILRV) are Extracellular-facing. Asn-8 carries N-linked (GlcNAc...) asparagine glycosylation. Residues 29–42 (ILFMIILSGNLSII) traverse the membrane as a helical segment. At 43-50 (ILIRISSQ) the chain is on the cytoplasmic side. A helical membrane pass occupies residues 51-71 (LHHPMYFFLSHLAFADMAYSS). The Extracellular segment spans residues 72–95 (SVTPNMLVNFLVERNTVSYLGCAI). The cysteines at positions 93 and 185 are disulfide-linked. A helical transmembrane segment spans residues 96–116 (QLGSAAFFATVECVLLAAMAY). Over 117-135 (DRFVAICSPLLYSTKMSTQ) the chain is Cytoplasmic. The chain crosses the membrane as a helical span at residues 136–156 (VSVQLLLVVYIAGFLIAVSYT). Over 157–192 (TSFYFLLFCGPNQVNHFFCDFAPLLELSCSDISVST) the chain is Extracellular. A helical membrane pass occupies residues 193-213 (VVLSFSSGSIIVVTVCVIAVC). Over 214-233 (YIYILITILKMRSTEGHHKA) the chain is Cytoplasmic. A helical membrane pass occupies residues 234–254 (FSTCTSHLTVVTLFYGTITFI). The Extracellular portion of the chain corresponds to 255–267 (YVMPNFSYSTDQN). An N-linked (GlcNAc...) asparagine glycan is attached at Asn-259. Residues 268-288 (KVVSVLYTVVIPMLNPLIYSL) traverse the membrane as a helical segment. Residues 289 to 322 (RNKEIKGALKRELVRKILSHDACYFSRTSNNDIT) lie on the Cytoplasmic side of the membrane.

It belongs to the G-protein coupled receptor 1 family. In terms of tissue distribution, expressed in the tongue.

It localises to the cell membrane. Its function is as follows. Odorant receptor (Potential). May be involved in taste perception. The protein is Olfactory receptor 5P2 (OR5P2) of Homo sapiens (Human).